The sequence spans 443 residues: ATP-dependent protease ATPase subunit HslU (443 aa).

ATP is bound by residues Ile18 and 60–65 (GVGKTE). The segment at 139 to 158 (AKNNWGQNETPAEPSSARQS) is disordered. Positions 256, 321, and 393 each coordinate ATP.

Belongs to the ClpX chaperone family. HslU subfamily. As to quaternary structure, a double ring-shaped homohexamer of HslV is capped on each side by a ring-shaped HslU homohexamer. The assembly of the HslU/HslV complex is dependent on binding of ATP.

It is found in the cytoplasm. Its function is as follows. ATPase subunit of a proteasome-like degradation complex; this subunit has chaperone activity. The binding of ATP and its subsequent hydrolysis by HslU are essential for unfolding of protein substrates subsequently hydrolyzed by HslV. HslU recognizes the N-terminal part of its protein substrates and unfolds these before they are guided to HslV for hydrolysis. The chain is ATP-dependent protease ATPase subunit HslU from Erwinia tasmaniensis (strain DSM 17950 / CFBP 7177 / CIP 109463 / NCPPB 4357 / Et1/99).